Reading from the N-terminus, the 358-residue chain is uncharacterized protein (358 aa).

ATP is bound at residue 207 to 214 (AAVKDGKT).

This is an uncharacterized protein from Bacillus subtilis (strain 168).